Here is an 831-residue protein sequence, read N- to C-terminus: Phenylalanine--tRNA ligase beta subunit (831 aa).

In terms of domain architecture, tRNA-binding spans 44-155 (GPVDGPVTVG…GAAEPGADGA (112 aa)). Residues 414–489 (WSPPPIRMGV…RLEGLEVIPS (76 aa)) enclose the B5 domain. Mg(2+)-binding residues include Asp467, Asp473, Glu476, and Glu477. The 94-residue stretch at 737–830 (SPYPAVFQDV…AAERVGAVLR (94 aa)) folds into the FDX-ACB domain.

It belongs to the phenylalanyl-tRNA synthetase beta subunit family. Type 1 subfamily. Tetramer of two alpha and two beta subunits. It depends on Mg(2+) as a cofactor.

Its subcellular location is the cytoplasm. The enzyme catalyses tRNA(Phe) + L-phenylalanine + ATP = L-phenylalanyl-tRNA(Phe) + AMP + diphosphate + H(+). The chain is Phenylalanine--tRNA ligase beta subunit from Mycobacterium bovis (strain ATCC BAA-935 / AF2122/97).